The following is a 31-amino-acid chain: Cytochrome b6-f complex subunit 6 (31 aa).

A helical membrane pass occupies residues isoleucine 4–asparagine 26.

The protein belongs to the PetL family. The 4 large subunits of the cytochrome b6-f complex are cytochrome b6, subunit IV (17 kDa polypeptide, PetD), cytochrome f and the Rieske protein, while the 4 small subunits are PetG, PetL, PetM and PetN. The complex functions as a dimer.

It localises to the plastid. The protein localises to the chloroplast thylakoid membrane. Its function is as follows. Component of the cytochrome b6-f complex, which mediates electron transfer between photosystem II (PSII) and photosystem I (PSI), cyclic electron flow around PSI, and state transitions. PetL is important for photoautotrophic growth as well as for electron transfer efficiency and stability of the cytochrome b6-f complex. This chain is Cytochrome b6-f complex subunit 6, found in Dioscorea elephantipes (Elephant's foot yam).